The sequence spans 386 residues: Glucose-1-phosphate adenylyltransferase (386 aa).

Residues Y100, G165, 180–181 (EK), and S191 each bind alpha-D-glucose 1-phosphate.

This sequence belongs to the bacterial/plant glucose-1-phosphate adenylyltransferase family. In terms of assembly, homotetramer.

The catalysed reaction is alpha-D-glucose 1-phosphate + ATP + H(+) = ADP-alpha-D-glucose + diphosphate. It functions in the pathway glycan biosynthesis; glycogen biosynthesis. Its function is as follows. Involved in the biosynthesis of ADP-glucose, a building block required for the elongation reactions to produce glycogen. Catalyzes the reaction between ATP and alpha-D-glucose 1-phosphate (G1P) to produce pyrophosphate and ADP-Glc. The polypeptide is Glucose-1-phosphate adenylyltransferase (Clostridium botulinum (strain Alaska E43 / Type E3)).